The primary structure comprises 465 residues: Respiratory transcription factor ZNF1 (465 aa).

Positions 8–34 (CDCCCIRRVKCDRKKPCKCCLQHNLQC) form a DNA-binding region, zn(2)-C6 fungal-type.

It belongs to the MAL13 family.

It is found in the nucleus. In terms of biological role, transcription factor that regulates respiratory growth and plays a critical role in stress adaptation during non-fermentative growth. Binds to promoters of genes involved in non-fermentative metabolism, including processes such as gluconeogenesis (PCK1, FBP1 and MDH2), glyoxylate shunt (MLS1 and ICL1) and the tricarboxylic acid cycle (ACO1). Plays a role in maintaining mitochondrial morphology and function. Also plays a role in tolerance to pH and osmotic stress, especially during the oxidative metabolism. This is Respiratory transcription factor ZNF1 from Saccharomyces cerevisiae (strain ATCC 204508 / S288c) (Baker's yeast).